Reading from the N-terminus, the 339-residue chain is Glyceraldehyde-3-phosphate dehydrogenase (339 aa).

Residues 12–13 (RI), aspartate 34, and lysine 79 each bind NAD(+). Residues 150–152 (SCT), threonine 181, 210–211 (TG), and arginine 233 contribute to the D-glyceraldehyde 3-phosphate site. Cysteine 151 serves as the catalytic Nucleophile. Residue asparagine 316 coordinates NAD(+).

It belongs to the glyceraldehyde-3-phosphate dehydrogenase family. Homotetramer.

The protein localises to the cytoplasm. It carries out the reaction D-glyceraldehyde 3-phosphate + phosphate + NAD(+) = (2R)-3-phospho-glyceroyl phosphate + NADH + H(+). The protein operates within carbohydrate degradation; glycolysis; pyruvate from D-glyceraldehyde 3-phosphate: step 1/5. The polypeptide is Glyceraldehyde-3-phosphate dehydrogenase (GPD) (Cryptococcus neoformans var. neoformans serotype D (strain B-3501A) (Filobasidiella neoformans)).